Here is a 173-residue protein sequence, read N- to C-terminus: MARVEL domain-containing protein 1 (173 aa).

The residue at position 1 (Met1) is an N-acetylmethionine. At 1 to 29 the chain is on the cytoplasmic side; that stretch reads MLPPPPRQPPPQARAARGAVRLQRPFLRS. Residues 26–166 form the MARVEL domain; it reads FLRSPLGVLR…SALYGCGRRC (141 aa). Residues 30 to 50 form a helical membrane-spanning segment; sequence PLGVLRLLQLLAGAAFWITIA. Residues 51 to 59 lie on the Extracellular side of the membrane; the sequence is TSKYQGPVH. The helical transmembrane segment at 60-80 threads the bilayer; that stretch reads FALFVSVLFWLLTLGLYFLTL. The Cytoplasmic portion of the chain corresponds to 81 to 94; that stretch reads LGKHELVPVLGSRW. The chain crosses the membrane as a helical span at residues 95–115; sequence LMVNVAHDVLAAALYGAATGI. At 116-138 the chain is on the extracellular side; sequence MSDQMQRHSYCNLKDYPLPCAYH. A helical membrane pass occupies residues 139 to 159; that stretch reads AFLAAAVCGGVCHGLYLLSAL. The Cytoplasmic segment spans residues 160–173; the sequence is YGCGRRCQGKQEVA.

As to expression, widely expressed in normal tissues. Down-regulated in multiple primary tumors.

The protein localises to the cell membrane. Its subcellular location is the cytoplasm. The protein resides in the cytoskeleton. It localises to the nucleus. Its function is as follows. Microtubule-associated protein that exhibits cell cycle-dependent localization and can inhibit cell proliferation and migration. This Homo sapiens (Human) protein is MARVEL domain-containing protein 1 (MARVELD1).